The primary structure comprises 207 residues: B2 protein (207 aa).

The disordered stretch occupies residues M1 to L68. Low complexity-rich tracts occupy residues N8–G26 and K35–K52. Positions E72 to E204 constitute a DCD domain.

This chain is B2 protein, found in Daucus carota (Wild carrot).